The chain runs to 101 residues: Small ribosomal subunit protein bS18c (101 aa).

Over residues 1–19 (MDKSKQLFRKSKRSFRRRL) the composition is skewed to basic residues. Positions 1 to 23 (MDKSKQLFRKSKRSFRRRLPPIG) are disordered.

This sequence belongs to the bacterial ribosomal protein bS18 family. As to quaternary structure, part of the 30S ribosomal subunit.

Its subcellular location is the plastid. It is found in the chloroplast. The chain is Small ribosomal subunit protein bS18c from Acorus calamus (Sweet flag).